The chain runs to 355 residues: Ataxin-3 (355 aa).

Methionine 1 participates in a covalent cross-link: Peptide (Met-Gly) (interchain with G-Cter in ubiquitin). Residues methionine 1–methionine 180 enclose the Josephin domain. Catalysis depends on cysteine 14, which acts as the Nucleophile. Histidine 119 acts as the Proton acceptor in catalysis. Residue asparagine 134 is part of the active site. Lysine 200 is covalently cross-linked (Glycyl lysine isopeptide (Lys-Gly) (interchain with G-Cter in ubiquitin)). Serine 219 bears the Phosphoserine mark. UIM domains follow at residues glutamate 224–glutamate 243 and aspartate 244–serine 263. Polar residues predominate over residues methionine 257–aspartate 275. Residues methionine 257–lysine 355 are disordered. Phosphoserine is present on residues serine 268, serine 272, and serine 273. Basic and acidic residues predominate over residues glutamate 279–phenylalanine 289. A Phosphoserine modification is found at serine 321. One can recognise a UIM 3 domain in the interval serine 329 to asparagine 348. A compositionally biased stretch (basic and acidic residues) spans threonine 344–lysine 355.

Interacts with STUB1/CHIP (when monoubiquitinated). Interacts with DNA repair proteins RAD23A and RAD23B. Interacts with BECN1 (via its poly-Gln domain). Interacts with PRKN, UBR2, VCP and tubulin. Post-translationally, monoubiquitinated by UBE2W, possibly leading to activate the deubiquitinating enzyme activity.

The protein localises to the nucleus matrix. It localises to the nucleus. It is found in the lysosome membrane. The catalysed reaction is Thiol-dependent hydrolysis of ester, thioester, amide, peptide and isopeptide bonds formed by the C-terminal Gly of ubiquitin (a 76-residue protein attached to proteins as an intracellular targeting signal).. In terms of biological role, deubiquitinating enzyme involved in protein homeostasis maintenance, transcription, cytoskeleton regulation, myogenesis and degradation of misfolded chaperone substrates. Binds long polyubiquitin chains and trims them, while it has weak or no activity against chains of 4 or less ubiquitins. Involved in degradation of misfolded chaperone substrates via its interaction with STUB1/CHIP: recruited to monoubiquitinated STUB1/CHIP, and restricts the length of ubiquitin chain attached to STUB1/CHIP substrates and preventing further chain extension. Interacts with key regulators of transcription and represses transcription: acts as a histone-binding protein that regulates transcription. Acts as a negative regulator of mTORC1 signaling in response to amino acid deprivation by mediating deubiquitination of RHEB, thereby promoting RHEB inactivation by the TSC-TBC complex. Regulates autophagy via the deubiquitination of 'Lys-402' of BECN1 leading to the stabilization of BECN1. This Mus musculus (Mouse) protein is Ataxin-3 (Atxn3).